A 165-amino-acid polypeptide reads, in one-letter code: MTLEEFSAAEQKIERMDTVGDALEEVLSKARSQRTITVGVYEAAKLLNVDPDNVVLCLLAADEDDDRDVALQIHFTLIRAFCCENDINILRVSNPGRLAELLLLENDKSPAESGGLAQTPDLHCVLVTNPHSSQWKDPALSQLICFCRESRYMDQWVPVINLPER.

T2 is modified (phosphothreonine).

Belongs to the GADD45 family. In terms of assembly, interacts with AURKA, PCNA, GADD45GIP1 and MAPK14.

It is found in the nucleus. Its function is as follows. Might affect PCNA interaction with some CDK (cell division protein kinase) complexes; stimulates DNA excision repair in vitro and inhibits entry of cells into S phase. In T-cells, functions as a regulator of p38 MAPKs by inhibiting p88 phosphorylation and activity. The sequence is that of Growth arrest and DNA damage-inducible protein GADD45 alpha (Gadd45a) from Rattus norvegicus (Rat).